Here is a 394-residue protein sequence, read N- to C-terminus: Chorismate synthase (394 aa).

Residue arginine 62 participates in NADP(+) binding. FMN is bound by residues 144 to 146, glycine 307, 322 to 326, and arginine 349; these read RAS and KPTPT.

The protein belongs to the chorismate synthase family. As to quaternary structure, homotetramer. The cofactor is FMNH2.

It carries out the reaction 5-O-(1-carboxyvinyl)-3-phosphoshikimate = chorismate + phosphate. It participates in metabolic intermediate biosynthesis; chorismate biosynthesis; chorismate from D-erythrose 4-phosphate and phosphoenolpyruvate: step 7/7. Functionally, catalyzes the anti-1,4-elimination of the C-3 phosphate and the C-6 proR hydrogen from 5-enolpyruvylshikimate-3-phosphate (EPSP) to yield chorismate, which is the branch point compound that serves as the starting substrate for the three terminal pathways of aromatic amino acid biosynthesis. This reaction introduces a second double bond into the aromatic ring system. The chain is Chorismate synthase from Acetivibrio thermocellus (strain ATCC 27405 / DSM 1237 / JCM 9322 / NBRC 103400 / NCIMB 10682 / NRRL B-4536 / VPI 7372) (Clostridium thermocellum).